A 425-amino-acid polypeptide reads, in one-letter code: RNA polymerase II-associated factor 1 homolog (425 aa).

Residues 152–174 (KKNQQVEDMYRDKQSQIDAINKT) are a coiled coil. The disordered stretch occupies residues 331 to 425 (SRKSKLTLTY…KEPTVDSDSD (95 aa)). 2 stretches are compositionally biased toward basic and acidic residues: residues 344-380 (SELE…KEEG) and 393-402 (DKPQKSRSDS).

The protein belongs to the PAF1 family. As to quaternary structure, component of the PAF1 complex which consists of at least cdc-73, ctr-9, leo-1, pafo-1 and rtfo-1.

It localises to the nucleus. Functionally, component of the PAF1 complex which is a multifunctional complex involved in transcription initiation via genetic interactions with TATA-binding proteins, elongation and transcription-coupled histone modification. The polypeptide is RNA polymerase II-associated factor 1 homolog (Caenorhabditis elegans).